We begin with the raw amino-acid sequence, 1202 residues long: Metabotropic glycine receptor (1202 aa).

An N-terminal signal peptide occupies residues 1-24; that stretch reads MGAMAYSLLLCLLLAHLGLGEVGA. Residues 25–62 are disordered; it reads SLDPSERPDSSRERTSRGKQHGQQLPRASAPDPSIPWS. The Extracellular portion of the chain corresponds to 25–417; sequence SLDPSERPDS…CFVQEDKYLR (393 aa). Residues 28 to 40 are compositionally biased toward basic and acidic residues; the sequence is PSERPDSSRERTS. The tract at residues 85–281 is cache-like region; the sequence is YLYTGDFHQL…CENGSYKPGW (197 aa). N-linked (GlcNAc...) asparagine glycosylation is found at N98 and N143. C99 and C272 form a disulfide bridge. S172 and R173 together coordinate glycine. N215 carries N-linked (GlcNAc...) asparagine glycosylation. Positions 234 to 253 are disordered; sequence LHRRGSNQGPRGLGHSWRRR. E271 serves as a coordination point for glycine. The N-linked (GlcNAc...) asparagine glycan is linked to N274. Glycine is bound at residue D307. N333 is a glycosylation site (N-linked (GlcNAc...) asparagine). A helical transmembrane segment spans residues 418–439; the sequence is LAIISFQALCMLLDFVSMLVVY. The Cytoplasmic segment spans residues 440-451; sequence HFRKAKSIRASG. The helical transmembrane segment at 452–474 threads the bilayer; that stretch reads LILLETILFGSLLLYFPVVILYF. Over 475–478 the chain is Extracellular; that stretch reads EPST. Residues 479–501 form a helical membrane-spanning segment; that stretch reads FRCILLRWVRLLGFATVYGTVTL. The cysteines at positions 481 and 573 are disulfide-linked. The Cytoplasmic segment spans residues 502–525; the sequence is KLHRVLKVFLSRTAQRIPYMTGGR. Residues 526 to 547 traverse the membrane as a helical segment; that stretch reads VMRMLAVIVLVVFWFLVGWTSS. The Extracellular portion of the chain corresponds to 548-576; sequence MCQNLERDILLVGQGQTSDNLTFNMCLID. Residues 577-597 traverse the membrane as a helical segment; it reads RWDYMTAVAEFLFLLWGIYLC. The Cytoplasmic segment spans residues 598–611; the sequence is YAVRTVPSAFHEPR. The chain crosses the membrane as a helical span at residues 612–633; the sequence is YMAVAVHNELIITAIFHTIRFV. At 634–642 the chain is on the extracellular side; it reads LASRLQPDW. A helical membrane pass occupies residues 643–664; it reads MLMLYFAHTHLTVTVTIGLLLI. Residues 665–1202 are Cytoplasmic-facing; it reads PKFSHSSNNP…SASKIPGPRK (538 aa). Residues S694, S705, and S708 each carry the phosphoserine modification. Disordered regions lie at residues 757-899 and 914-995; these read RITE…TSML and LGLA…QIKD. Composition is skewed to basic and acidic residues over residues 769-781 and 819-828; these read CSKE…DHSA and STYDHVRDQT. A Glycyl lysine isopeptide (Lys-Gly) (interchain with G-Cter in ubiquitin) cross-link involves residue K774. Residues 845–856 show a composition bias toward low complexity; it reads ENSTLESLSSKK. S865 bears the Phosphoserine mark. The segment covering 925 to 943 has biased composition (basic and acidic residues); it reads MEDRAKSQKPQPKDRETNR. Polar residues-rich tracts occupy residues 944 to 958 and 975 to 994; these read KYSN…PNSN and QRVN…TQIK. Position 946 is a phosphoserine (S946). Positions 1002–1006 match the VCPWE motif 1 motif; sequence VCPWE. Position 1061 is a phosphoserine (S1061). The VCPWE motif 2 motif lies at 1067–1071; sequence VCPWE. S1076 bears the Phosphoserine mark. Composition is skewed to polar residues over residues 1132–1144 and 1151–1162; these read QMGD…SSSV and CISSNNSPQPLT. Residues 1132 to 1162 form a disordered region; sequence QMGDQEKQTSSSVDIIPGSCISSNNSPQPLT. Residues 1167–1171 carry the VCPWE motif 3 motif; it reads VCPWE.

This sequence belongs to the G-protein coupled receptor 3 family. In terms of assembly, homodimer. Associates with the RGS7-GNB5 complex, promoting its localization to the cell membrane and regulating its GTPase activator activity. Interacts (via VCPWE motifs) with GNAO1. Interacts with GPC4. Interacts with EGFLAM.

The protein resides in the cell membrane. Its subcellular location is the postsynaptic cell membrane. It is found in the presynaptic cell membrane. The protein localises to the nucleus. Functionally, metabotropic receptor for glycine that controls synapse formation and function in the brain. Acts as an atypical G-protein coupled receptor that recruits and regulates the RGS7-GNB5 complex instead of activating G proteins. In absence of glycine ligand, promotes the GTPase activator activity of RGS7, increasing the GTPase activity of G protein alpha subunits, thereby driving them into their inactive GDP-bound form. Glycine-binding changes the conformation of the intracellular surface, inhibiting the GTPase activator activity of the RGS7-GNB5 complex, promoting G protein alpha subunits into their active GTP-bound form and regulating cAMP levels. Also able to bind taurine, a compound closely related to glycine, but with a two-fold lower affinity. Glycine receptor-dependent regulation of cAMP controls key ion channels, kinases and neurotrophic factors involved in neuronal excitability and synaptic transmission. Plays a pivotal role in regulating mood and cognition via its ability to regulate neuronal excitability in L2/L3 pyramidal neurons of the prefrontal cortex. Also involved in spatial learning by regulating hippocampal CA1 neuronal excitability. Acts as a synaptic organizer in the hippocampus, required for proper mossy fiber-CA3 neurocircuitry establishment, structure and function: induces presynaptic differentiation in contacting axons via its interaction with GPC4. In addition to glycine, may also act as a receptor for osteocalcin (BGLAP) hormone: osteocalcin-binding initiates a signaling response that prevents neuronal apoptosis in the hippocampus and regulates the synthesis of neurotransmitters. This is Metabotropic glycine receptor from Rattus norvegicus (Rat).